The following is a 298-amino-acid chain: Glutamyl-Q tRNA(Asp) synthetase (298 aa).

Residues 8–12 (RFAPS) and Glu44 contribute to the L-glutamate site. Positions 11 to 21 (PSPTGPLHFGS) match the 'HIGH' region motif. Residues Cys100, Cys102, Tyr123, and Cys127 each coordinate Zn(2+). Residues Tyr183 and Arg201 each contribute to the L-glutamate site. The 'KMSKS' region signature appears at 239-243 (KLSKQ). Lys242 contributes to the ATP binding site.

This sequence belongs to the class-I aminoacyl-tRNA synthetase family. GluQ subfamily. Requires Zn(2+) as cofactor.

Its function is as follows. Catalyzes the tRNA-independent activation of glutamate in presence of ATP and the subsequent transfer of glutamate onto a tRNA(Asp). Glutamate is transferred on the 2-amino-5-(4,5-dihydroxy-2-cyclopenten-1-yl) moiety of the queuosine in the wobble position of the QUC anticodon. The chain is Glutamyl-Q tRNA(Asp) synthetase from Burkholderia cenocepacia (strain ATCC BAA-245 / DSM 16553 / LMG 16656 / NCTC 13227 / J2315 / CF5610) (Burkholderia cepacia (strain J2315)).